The primary structure comprises 245 residues: Probable transcriptional regulatory protein MARTH_orf271 (245 aa).

This sequence belongs to the TACO1 family.

Its subcellular location is the cytoplasm. This Metamycoplasma arthritidis (strain 158L3-1) (Mycoplasma arthritidis) protein is Probable transcriptional regulatory protein MARTH_orf271.